We begin with the raw amino-acid sequence, 299 residues long: MAAEAAPEWVEKGDNAWPLAAATLVGLQSVPRLVILYGDCGAVGPRTEKDREAFPPNNVLLTLAGAGLLLWMGWTGFNGGAPYAANVDASVTVVNTHLCTATSLLVWLLLDSFVFGRLSVISAVQGMITGLVCVTPAARLVLHKRSRLLARVDDTLAVLHTHGVAGSLSGVLTGLLLLAEPRFARLFFGDDPRYVGLAYAVRDGRAGSGLRQVGVQLAGIAFVVALNVAVTSAVCLAVRVAVPQLAGGGDAIHGEDAYAVWGDGETYEQYSVHGGGSNHGGFPMTANPVASKADEMIWI.

The next 5 membrane-spanning stretches (helical) occupy residues 16–36 (AWPL…LVIL), 59–79 (VLLT…GFNG), 104–124 (LLVW…ISAV), 158–178 (VLHT…LLLL), and 218–238 (AGIA…CLAV).

It belongs to the ammonia transporter channel (TC 1.A.11.2) family.

The protein localises to the membrane. The polypeptide is Putative ammonium transporter 4 member 1 (AMT4-1) (Oryza sativa subsp. japonica (Rice)).